The sequence spans 169 residues: Succinate dehydrogenase cytochrome b560 subunit, mitochondrial (169 aa).

A mitochondrion-targeting transit peptide spans 1–29 (MAALLLRHVGRHCLRAHLSPQLCIRNAVP). At 30–62 (LGTTAKEEMERFWNKNLGSNRPLSPHITIYRWS) the chain is on the mitochondrial matrix side. A helical transmembrane segment spans residues 63-92 (LPMAMSICHRGTGIALSAGVSLFGLSALLL). At 93–112 (PGNFESHLELVKSLCLGPTL) the chain is on the mitochondrial intermembrane side. A helical transmembrane segment spans residues 113–137 (IYTAKFGIVFPLMYHTWNGIRHLIW). Residue H127 participates in heme b binding. Residues 138 to 144 (DLGKGLT) lie on the Mitochondrial matrix side of the membrane. Residues 145–166 (IPQLTQSGVVVLILTVLSSVGL) traverse the membrane as a helical segment. Residues 167-169 (AAM) lie on the Mitochondrial intermembrane side of the membrane.

Belongs to the cytochrome b560 family. As to quaternary structure, component of complex II composed of four subunits: the flavoprotein (FP) SDHA, iron-sulfur protein (IP) SDHB, and a cytochrome b560 composed of SDHC and SDHD. The cofactor is heme b. In terms of tissue distribution, detected in heart muscle (at protein level).

It is found in the mitochondrion inner membrane. It functions in the pathway carbohydrate metabolism; tricarboxylic acid cycle. In terms of biological role, membrane-anchoring subunit of succinate dehydrogenase (SDH) that is involved in complex II of the mitochondrial electron transport chain and is responsible for transferring electrons from succinate to ubiquinone (coenzyme Q). SDH also oxidizes malate to the non-canonical enol form of oxaloacetate, enol-oxaloacetate. Enol-oxaloacetate, which is a potent inhibitor of the succinate dehydrogenase activity, is further isomerized into keto-oxaloacetate. In Sus scrofa (Pig), this protein is Succinate dehydrogenase cytochrome b560 subunit, mitochondrial (SDHC).